We begin with the raw amino-acid sequence, 351 residues long: Nicotinate-nucleotide--dimethylbenzimidazole phosphoribosyltransferase (351 aa).

Residue Glu317 is the Proton acceptor of the active site.

The protein belongs to the CobT family.

It carries out the reaction 5,6-dimethylbenzimidazole + nicotinate beta-D-ribonucleotide = alpha-ribazole 5'-phosphate + nicotinate + H(+). The protein operates within nucleoside biosynthesis; alpha-ribazole biosynthesis; alpha-ribazole from 5,6-dimethylbenzimidazole: step 1/2. In terms of biological role, catalyzes the synthesis of alpha-ribazole-5'-phosphate from nicotinate mononucleotide (NAMN) and 5,6-dimethylbenzimidazole (DMB). The polypeptide is Nicotinate-nucleotide--dimethylbenzimidazole phosphoribosyltransferase (Bradyrhizobium sp. (strain ORS 278)).